A 251-amino-acid polypeptide reads, in one-letter code: Pyridoxine 5'-phosphate synthase (251 aa).

The 3-amino-2-oxopropyl phosphate site is built by asparagine 8 and arginine 19. The active-site Proton acceptor is the histidine 44. 2 residues coordinate 1-deoxy-D-xylulose 5-phosphate: arginine 46 and histidine 51. Residue glutamate 76 is the Proton acceptor of the active site. Threonine 106 is a binding site for 1-deoxy-D-xylulose 5-phosphate. Residue histidine 200 is the Proton donor of the active site. Residues aspartate 201 and 223 to 224 (GH) each bind 3-amino-2-oxopropyl phosphate.

The protein belongs to the PNP synthase family. As to quaternary structure, homooctamer; tetramer of dimers.

It localises to the cytoplasm. It carries out the reaction 3-amino-2-oxopropyl phosphate + 1-deoxy-D-xylulose 5-phosphate = pyridoxine 5'-phosphate + phosphate + 2 H2O + H(+). It functions in the pathway cofactor biosynthesis; pyridoxine 5'-phosphate biosynthesis; pyridoxine 5'-phosphate from D-erythrose 4-phosphate: step 5/5. Its function is as follows. Catalyzes the complicated ring closure reaction between the two acyclic compounds 1-deoxy-D-xylulose-5-phosphate (DXP) and 3-amino-2-oxopropyl phosphate (1-amino-acetone-3-phosphate or AAP) to form pyridoxine 5'-phosphate (PNP) and inorganic phosphate. The polypeptide is Pyridoxine 5'-phosphate synthase (Agrobacterium fabrum (strain C58 / ATCC 33970) (Agrobacterium tumefaciens (strain C58))).